The chain runs to 407 residues: Tryptophan synthase beta chain (407 aa).

An N6-(pyridoxal phosphate)lysine modification is found at Lys-91.

The protein belongs to the TrpB family. In terms of assembly, tetramer of two alpha and two beta chains. Requires pyridoxal 5'-phosphate as cofactor.

It carries out the reaction (1S,2R)-1-C-(indol-3-yl)glycerol 3-phosphate + L-serine = D-glyceraldehyde 3-phosphate + L-tryptophan + H2O. It participates in amino-acid biosynthesis; L-tryptophan biosynthesis; L-tryptophan from chorismate: step 5/5. Its function is as follows. The beta subunit is responsible for the synthesis of L-tryptophan from indole and L-serine. The sequence is that of Tryptophan synthase beta chain from Streptococcus pneumoniae (strain Taiwan19F-14).